A 406-amino-acid polypeptide reads, in one-letter code: Coenzyme A biosynthesis bifunctional protein CoaBC (406 aa).

Residues Ser2 to Asn190 form a phosphopantothenoylcysteine decarboxylase region. The Proton donor role is filled by Cys158. The interval Ile191–Arg406 is phosphopantothenate--cysteine ligase. CTP is bound by residues Gly273–Ala275, Asp279, Lys289, Pro308–Val311, Phe327, Lys341, and Lys345.

This sequence in the N-terminal section; belongs to the HFCD (homo-oligomeric flavin containing Cys decarboxylase) superfamily. In the C-terminal section; belongs to the PPC synthetase family. Mg(2+) serves as cofactor. It depends on FMN as a cofactor.

It carries out the reaction N-[(R)-4-phosphopantothenoyl]-L-cysteine + H(+) = (R)-4'-phosphopantetheine + CO2. The enzyme catalyses (R)-4'-phosphopantothenate + L-cysteine + CTP = N-[(R)-4-phosphopantothenoyl]-L-cysteine + CMP + diphosphate + H(+). It participates in cofactor biosynthesis; coenzyme A biosynthesis; CoA from (R)-pantothenate: step 2/5. Its pathway is cofactor biosynthesis; coenzyme A biosynthesis; CoA from (R)-pantothenate: step 3/5. Its function is as follows. Catalyzes two sequential steps in the biosynthesis of coenzyme A. In the first step cysteine is conjugated to 4'-phosphopantothenate to form 4-phosphopantothenoylcysteine. In the second step the latter compound is decarboxylated to form 4'-phosphopantotheine. This Escherichia coli O6:H1 (strain CFT073 / ATCC 700928 / UPEC) protein is Coenzyme A biosynthesis bifunctional protein CoaBC.